The sequence spans 235 residues: RAD9, HUS1, RAD1-interacting nuclear orphan protein 1 (235 aa).

A Phosphoserine modification is found at Ser-50. Residues 54 to 60 (SWVSPQF) carry the RAD1-binding motif motif. Disordered regions lie at residues 75-106 (HRDQ…SETL), 111-130 (RVQP…VPLF), and 149-198 (VFAP…LVKD). The segment covering 96-106 (ESPQSSSSETL) has biased composition (polar residues). The D-box motif lies at 123-130 (RRPLVPLF). A compositionally biased stretch (basic and acidic residues) spans 161 to 173 (SVRDDPISPDQKE). The short motif at 171–175 (QKENS) is the KEN box element.

Interacts (when phosphorylated by PLK1) with POLQ; promoting POLQ recruitment to DNA damage sites. Interacts with RAD1; interaction is direct and promotes association with the 9-1-1 (RAD9-RAD1-HUS1) complex. Interacts with RAD18. Interacts with TOPBP1. Interacts with UBE2N. Phosphorylated at Ser-50 by PLK1, promoting interaction with polymerase theta (POLQ). In terms of processing, ubiquitinated and degraded by the APC/C complex upon mitotic exit.

Its subcellular location is the nucleus. It is found in the chromosome. Its function is as follows. Involved in microhomology-mediated end-joining (MMEJ) DNA repair by promoting recruitment of polymerase theta (POLQ) to DNA damage sites during mitosis. MMEJ is an alternative non-homologous end-joining (NHEJ) machinery that takes place during mitosis to repair double-strand breaks in DNA that originate in S-phase. Accumulates in M-phase; following phosphorylation by PLK1, interacts with POLQ, enabling its recruitment to double-strand breaks for subsequent repair. Also involved in the DNA damage response (DDR) signaling in response to genotoxic stresses such as ionizing radiation (IR) during the S phase. Recruited to sites of DNA damage through interaction with the 9-1-1 cell-cycle checkpoint response complex and TOPBP1 in a ATR-dependent manner. Required for the progression of the G1 to S phase transition. Plays a role in the stimulation of CHEK1 phosphorylation. This is RAD9, HUS1, RAD1-interacting nuclear orphan protein 1 (Rhno1) from Mus musculus (Mouse).